Here is a 548-residue protein sequence, read N- to C-terminus: MAAKDVKFGNDARVKMLRGVNVLADAVKVTLGPKGRNVVLDKSFGAPTITKDGVSVAREIELEDKFENMGAQMVKEVASKANDAAGDGTTTATVLAQAIILKVMKAVAAGMNPMDLKRGIDKAVTVAVEELKALSVPCSDSKAIAQVGTISANSDETVGKLIAEAMDKVGKEGVITVEDGTGLQDELDVVEGMQFDRGYLSPYFINKPETGAVELESPFILLADKKISNIREMLPVLEAVAKAGKPLLIIAEDVEGEALATLVVNTMRGIVKVAAVKAPGFGDRRKAMLQDIATLTGGTVISEEIGMELEKATLEDLGQAKRVVINKDTTTIIDGVGEEAAIQGRVAQIRQQIEEATSDYDREKLQERVAKLAGGVAVIKVGAATEVEMKEKKARVEDALHATRAAVEEGVVAGGGVALIRVASKLADLRGQNEDQNVGIKVALRAMEAPLRQIVLNCGEEPSVVANTVKGGDGNYGYNAVXRRIRQHDRHGYPGSNQITRSALQYAASVAGLMITTECMVTDLPKNDAADLGAAGGMGGMGGMGGMM.

ATP is bound by residues 30 to 33 (TLGP), Lys51, 87 to 91 (DGTTT), Gly415, and 479 to 481 (NAV).

The protein belongs to the chaperonin (HSP60) family. As to quaternary structure, forms a cylinder of 14 subunits composed of two heptameric rings stacked back-to-back. Interacts with the co-chaperonin GroES.

The protein resides in the cytoplasm. It carries out the reaction ATP + H2O + a folded polypeptide = ADP + phosphate + an unfolded polypeptide.. Its function is as follows. Together with its co-chaperonin GroES, plays an essential role in assisting protein folding. The GroEL-GroES system forms a nano-cage that allows encapsulation of the non-native substrate proteins and provides a physical environment optimized to promote and accelerate protein folding. This is Chaperonin GroEL from Stenotrophomonas maltophilia (Pseudomonas maltophilia).